Reading from the N-terminus, the 170-residue chain is MAPKKAKRRAAAEGGSSNVFSMFDQTQIQEFKEAFTVIDQNRDGIIDKEDLRDTFAAMGRLNVKNEELDAMMKEASGPINFTVFLTMFGEKLKGADPEDVITGAFKVLDPEGKGTIKKQFLEELLTTQCDRFSQEEIKNMWAAFPPDVGGNVDYKNICYVITHGDAKDQE.

Ala2 bears the N,N,N-trimethylalanine mark. Ser16 and Ser17 each carry phosphoserine. 2 positions are modified to phosphothreonine: Thr26 and Thr36. In terms of domain architecture, EF-hand 1 spans 26–61 (TQIQEFKEAFTVIDQNRDGIIDKEDLRDTFAAMGRL). 4 residues coordinate Ca(2+): Asp39, Asn41, Asp43, and Asp50. Ser76 bears the Phosphoserine mark. 2 consecutive EF-hand domains span residues 96 to 131 (DPED…QCDR) and 132 to 167 (FSQE…GDAK). Thr102 carries the post-translational modification Phosphothreonine.

As to quaternary structure, myosin is a hexamer of 2 heavy chains and 4 light chains. In terms of processing, n,N,N-trimethylalanine found in this myosin light chain would not have been detected in the N-terminal tryptic peptide in PubMed:863872 and PubMed:352892 because it would remain trimethylated and ninhydrin negative after hydrolysis.

Myosin regulatory subunit that plays an essential role to maintain muscle integrity during early development. Plays a role in muscle contraction. The sequence is that of Myosin regulatory light chain 11 (MYL11) from Oryctolagus cuniculus (Rabbit).